Here is a 295-residue protein sequence, read N- to C-terminus: Peptide transport system permease protein SapC (295 aa).

Transmembrane regions (helical) follow at residues 27 to 47, 102 to 122, 129 to 149, 157 to 177, 219 to 239, and 262 to 282; these read IALF…FASY, LLVV…AGLL, FVGH…AVVI, LWNA…HTIY, VARA…ISLG, and PWTV…SIIF. Residues 98-278 form the ABC transmembrane type-1 domain; sequence LGSALLVVFS…GFAIIFTILL (181 aa).

It belongs to the binding-protein-dependent transport system permease family. OppBC subfamily.

The protein resides in the cell inner membrane. Functionally, involved in a peptide intake transport system that plays a role in the resistance to antimicrobial peptides. This is Peptide transport system permease protein SapC (sapC) from Haemophilus influenzae (strain ATCC 51907 / DSM 11121 / KW20 / Rd).